We begin with the raw amino-acid sequence, 566 residues long: Urease subunit alpha (566 aa).

Positions 128 to 566 (GGIDTHIHWI…LPMAQRYFLF (439 aa)) constitute a Urease domain. Ni(2+) contacts are provided by His-133, His-135, and Lys-216. Lys-216 is subject to N6-carboxylysine. Residue His-218 participates in substrate binding. 2 residues coordinate Ni(2+): His-245 and His-271. Catalysis depends on His-319, which acts as the Proton donor. Asp-359 provides a ligand contact to Ni(2+).

It belongs to the metallo-dependent hydrolases superfamily. Urease alpha subunit family. As to quaternary structure, heterotrimer of UreA (gamma), UreB (beta) and UreC (alpha) subunits. Three heterotrimers associate to form the active enzyme. Ni cation serves as cofactor. In terms of processing, carboxylation allows a single lysine to coordinate two nickel ions.

The protein resides in the cytoplasm. It catalyses the reaction urea + 2 H2O + H(+) = hydrogencarbonate + 2 NH4(+). It functions in the pathway nitrogen metabolism; urea degradation; CO(2) and NH(3) from urea (urease route): step 1/1. This chain is Urease subunit alpha, found in Acinetobacter baylyi (strain ATCC 33305 / BD413 / ADP1).